Consider the following 197-residue polypeptide: Short chain dehydrogenase ausX (197 aa).

Residues I49, D95, R157, and Y189 each coordinate NADP(+). The Proton acceptor role is filled by Y189. The active-site Proton donor is Y189.

The protein belongs to the short-chain dehydrogenases/reductases (SDR) family.

It functions in the pathway secondary metabolite biosynthesis; terpenoid biosynthesis. Short chain dehydrogenase; part of the gene cluster A that mediates the biosynthesis of austinol and dehydroaustinol, two fungal meroterpenoids. The first step of the pathway is the synthesis of 3,5-dimethylorsellinic acid by the polyketide synthase ausA. 3,5-dimethylorsellinic acid is then prenylated by the polyprenyl transferase ausN. Further epoxidation by the FAD-dependent monooxygenase ausM and cyclization by the probable terpene cyclase ausL lead to the formation of protoaustinoid A. Protoaustinoid A is then oxidized to spiro-lactone preaustinoid A3 by the combined action of the FAD-binding monooxygenases ausB and ausC, and the dioxygenase ausE. Acid-catalyzed keto-rearrangement and ring contraction of the tetraketide portion of preaustinoid A3 by ausJ lead to the formation of preaustinoid A4. The aldo-keto reductase ausK, with the help of ausH, is involved in the next step by transforming preaustinoid A4 into isoaustinone which is in turn hydroxylated by the P450 monooxygenase ausI to form austinolide. Finally, the cytochrome P450 monooxygenase ausG modifies austinolide to austinol. Austinol can be further modified to dehydroaustinol which forms a diffusible complex with diorcinol that initiates conidiation. Due to genetic rearrangements of the clusters and the subsequent loss of some enzymes, the end products of the Emericella nidulans austinoid biosynthesis clusters are austinol and dehydroaustinol, even if additional enzymes, such as the O-acetyltransferase ausQ and the cytochrome P450 monooxygenase ausR are still functional. This chain is Short chain dehydrogenase ausX, found in Emericella nidulans (strain FGSC A4 / ATCC 38163 / CBS 112.46 / NRRL 194 / M139) (Aspergillus nidulans).